The chain runs to 494 residues: Vacuolar-processing enzyme (494 aa).

The N-terminal stretch at 1–20 is a signal peptide; the sequence is MTRLASGVLITLLVALAGIA. N-linked (GlcNAc...) asparagine glycosylation is present at Asn-151. His-178 is a catalytic residue. Cys-220 serves as the catalytic Nucleophile. The cysteines at positions 253 and 267 are disulfide-linked. An N-linked (GlcNAc...) asparagine glycan is attached at Asn-336. 2 disulfides stabilise this stretch: Cys-430–Cys-460 and Cys-442–Cys-477.

It belongs to the peptidase C13 family. In terms of tissue distribution, high levels are seen in the flowers, a lower level expression is seen in the leaves, while very low levels are seen in the stems and roots.

In terms of biological role, asparagine-specific endopeptidase that may be involved in processing of proteins targeted to vacuoles that accumulate during ethylene-regulated processes such as flower opening and flavedo degreening. In Citrus sinensis (Sweet orange), this protein is Vacuolar-processing enzyme.